The sequence spans 350 residues: Phosphotriesterase-related protein (350 aa).

Positions 22, 24, 169, 201, 230, and 298 each coordinate a divalent metal cation.

This sequence belongs to the metallo-dependent hydrolases superfamily. Phosphotriesterase family. A divalent metal cation is required as a cofactor.

This chain is Phosphotriesterase-related protein, found in Drosophila sechellia (Fruit fly).